The chain runs to 652 residues: RNA-binding E3 ubiquitin-protein ligase MEX3C (652 aa).

Disordered regions lie at residues 15–39 and 80–136; these read AAPA…ELEG and QARR…EDRP. Residues 18–33 are compositionally biased toward pro residues; the sequence is APLPQPPPLPPPPPAG. Acidic residues predominate over residues 101–134; that stretch reads AELELEVDEEEGEEAELDGELLEEEELEEAEEED. 2 KH domains span residues 225 to 286 and 319 to 380; these read TTEC…KREI and QTTV…REEI. Disordered regions lie at residues 429 to 448 and 506 to 566; these read ARMM…SGST and FEPV…HVGL. Residues 430 to 448 show a composition bias toward low complexity; that stretch reads RMMSNYRNDSSSSLGSGST. Polar residues predominate over residues 519–537; that stretch reads PSGNMKTQRRGSQPSTPRL. Residues Ser530 and Ser538 each carry the phosphoserine modification. A compositionally biased stretch (basic and acidic residues) spans 544-555; that stretch reads SIEHPLARRVRS. The segment at 601–641 adopts an RING-type zinc-finger fold; the sequence is CVICFENEVIAALVPCGHNLFCMECANKICEKRTPSCPVCQ.

As to quaternary structure, interacts with USP7, which antagonizes the ability to degrade mRNA. In terms of processing, phosphorylated.

It is found in the nucleus. The protein localises to the cytoplasm. The enzyme catalyses S-ubiquitinyl-[E2 ubiquitin-conjugating enzyme]-L-cysteine + [acceptor protein]-L-lysine = [E2 ubiquitin-conjugating enzyme]-L-cysteine + N(6)-ubiquitinyl-[acceptor protein]-L-lysine.. Functionally, RNA-binding protein. May be involved in post-transcriptional regulatory mechanisms, modulating levels of some mRNAs by promoting their degradation in a way involving ubiquitin ligase activity. May act as suppressor of replication stress and chromosome missegregation. This chain is RNA-binding E3 ubiquitin-protein ligase MEX3C (Mex3c), found in Mus musculus (Mouse).